The chain runs to 346 residues: WD repeat-containing protein LWD1 (346 aa).

N-acetylmethionine is present on Met1. WD repeat units lie at residues 79–121, 133–173, 176–214, and 265–305; these read EHPY…SRVE, EFCG…VDTQ, AHDK…HSTI, and RHQA…QHVE.

It localises to the nucleus. Functionally, clock protein essential for the proper expression phase and period length of both the oscillator and output genes known to participate in photoperiod sensing. Required for the expression of APRR9, APRR7, and APRR5. Regulated by APRR9 and APRR7 at the transcriptional level, indicating the existence of a positive feedback loop within the circadian clock. May function to delay the expression of the morning genes until dawn approaches. This chain is WD repeat-containing protein LWD1 (LWD1), found in Arabidopsis thaliana (Mouse-ear cress).